The primary structure comprises 308 residues: D-alanine--D-alanine ligase B (308 aa).

An ATP-grasp domain is found at 102–302 (KKIVKTVGVP…FGELLSWMVE (201 aa)). 128 to 183 (PMKPPYVIKPVNEGSSFGVVIVSEGQSHPPQVVGSSEWKYGDTVMVERYIHGRELT) serves as a coordination point for ATP. Mg(2+) is bound by residues D252, E269, and N271.

This sequence belongs to the D-alanine--D-alanine ligase family. Requires Mg(2+) as cofactor. Mn(2+) is required as a cofactor.

Its subcellular location is the cytoplasm. The enzyme catalyses 2 D-alanine + ATP = D-alanyl-D-alanine + ADP + phosphate + H(+). The protein operates within cell wall biogenesis; peptidoglycan biosynthesis. Its function is as follows. Cell wall formation. The chain is D-alanine--D-alanine ligase B from Mesorhizobium japonicum (strain LMG 29417 / CECT 9101 / MAFF 303099) (Mesorhizobium loti (strain MAFF 303099)).